Consider the following 180-residue polypeptide: CDP-archaeol synthase (180 aa).

5 helical membrane passes run leucine 5–leucine 25, alanine 54–alanine 74, leucine 78–methionine 98, alanine 118–valine 138, and tryptophan 142–leucine 162.

This sequence belongs to the CDP-archaeol synthase family. Mg(2+) is required as a cofactor.

It localises to the cell membrane. The catalysed reaction is 2,3-bis-O-(geranylgeranyl)-sn-glycerol 1-phosphate + CTP + H(+) = CDP-2,3-bis-O-(geranylgeranyl)-sn-glycerol + diphosphate. It participates in membrane lipid metabolism; glycerophospholipid metabolism. Its function is as follows. Catalyzes the formation of CDP-2,3-bis-(O-geranylgeranyl)-sn-glycerol (CDP-archaeol) from 2,3-bis-(O-geranylgeranyl)-sn-glycerol 1-phosphate (DGGGP) and CTP. This reaction is the third ether-bond-formation step in the biosynthesis of archaeal membrane lipids. This Halorubrum lacusprofundi (strain ATCC 49239 / DSM 5036 / JCM 8891 / ACAM 34) protein is CDP-archaeol synthase.